Reading from the N-terminus, the 103-residue chain is Large ribosomal subunit protein bL21 (103 aa).

Belongs to the bacterial ribosomal protein bL21 family. As to quaternary structure, part of the 50S ribosomal subunit. Contacts protein L20.

Its function is as follows. This protein binds to 23S rRNA in the presence of protein L20. The chain is Large ribosomal subunit protein bL21 from Acetivibrio thermocellus (strain ATCC 27405 / DSM 1237 / JCM 9322 / NBRC 103400 / NCIMB 10682 / NRRL B-4536 / VPI 7372) (Clostridium thermocellum).